The chain runs to 495 residues: Glucose-6-phosphate 1-dehydrogenase (495 aa).

NADP(+) is bound by residues 11-18 (GASGDLAK), R45, 84-85 (DV), and K147. H177, K181, E215, and D234 together coordinate substrate. H239 functions as the Proton acceptor in the catalytic mechanism. Substrate contacts are provided by K339 and K344.

Belongs to the glucose-6-phosphate dehydrogenase family.

It carries out the reaction D-glucose 6-phosphate + NADP(+) = 6-phospho-D-glucono-1,5-lactone + NADPH + H(+). The protein operates within carbohydrate degradation; pentose phosphate pathway; D-ribulose 5-phosphate from D-glucose 6-phosphate (oxidative stage): step 1/3. Its function is as follows. Catalyzes the oxidation of glucose 6-phosphate to 6-phosphogluconolactone. The polypeptide is Glucose-6-phosphate 1-dehydrogenase (Streptococcus pneumoniae serotype 4 (strain ATCC BAA-334 / TIGR4)).